We begin with the raw amino-acid sequence, 535 residues long: Beta-amylase (535 aa).

Residues Asp-51, His-91, and Asp-99 each contribute to the substrate site. The active-site Proton donor is Glu-184. Substrate contacts are provided by Lys-293, His-298, and Thr-340. Glu-378 serves as the catalytic Proton acceptor. Residues 379 to 380 and Arg-418 each bind substrate; that span reads NA. A run of 3 repeats spans residues 489 to 499, 500 to 510, and 511 to 521. A 4 X 11 AA tandem repeats region spans residues 489-532; sequence GPTGGMGGQAEGPTCGMGGQVKGPTGGMGGQAEDPTSGIGGELP. The disordered stretch occupies residues 513–535; sequence TGGMGGQAEDPTSGIGGELPATM. The stretch at 522 to 532 is one 4; approximate repeat; that stretch reads DPTSGIGGELP.

It belongs to the glycosyl hydrolase 14 family. Monomer.

It carries out the reaction Hydrolysis of (1-&gt;4)-alpha-D-glucosidic linkages in polysaccharides so as to remove successive maltose units from the non-reducing ends of the chains.. This is Beta-amylase (BMY1) from Hordeum vulgare (Barley).